A 358-amino-acid chain; its full sequence is MNQTHTFCDTLISTSNPLKQLGWKPFFQQQLTLDDYDNTIFARVIAHHRSGYLLATEAGQVHLNVHHSLPNMTVGDWVILNEDQQFVRLLDRLSLFSRKAAGSKVAEQLIAANVDTVFIVCSLNHDFNLSRIERYLALVHEADVEPVIVLSKADLCDDVDELKSQVQKLDPLLVIETVNGLDAESTSKLMSWCNEGQTVAFIGSSGVGKSTLVNALLGQQEQSTGHIREDDSKGRHTTTSRSIHLLPAGGILIDTPGMREIQLVDCEAGVSEAFADVEALADHCRFGDCKHQTEPGCAVQAAIENGSLEVRRFNNYQKLLREQAFNGATLAEQRAQSRQFGKLTRNVMSDKRKRQQSY.

Residues 106–261 (AEQLIAANVD…LIDTPGMREI (156 aa)) form the CP-type G domain. Residues 151–154 (SKAD) and 203–211 (GSSGVGKST) each bind GTP. Cys284, Cys289, His291, and Cys297 together coordinate Zn(2+).

The protein belongs to the TRAFAC class YlqF/YawG GTPase family. RsgA subfamily. As to quaternary structure, monomer. Associates with 30S ribosomal subunit, binds 16S rRNA. Zn(2+) is required as a cofactor.

The protein localises to the cytoplasm. In terms of biological role, one of several proteins that assist in the late maturation steps of the functional core of the 30S ribosomal subunit. Helps release RbfA from mature subunits. May play a role in the assembly of ribosomal proteins into the subunit. Circularly permuted GTPase that catalyzes slow GTP hydrolysis, GTPase activity is stimulated by the 30S ribosomal subunit. In Vibrio parahaemolyticus serotype O3:K6 (strain RIMD 2210633), this protein is Small ribosomal subunit biogenesis GTPase RsgA 2.